Consider the following 388-residue polypeptide: Dual-specificity RNA methyltransferase RlmN (388 aa).

Residue E109 is the Proton acceptor of the active site. Residues E115–D354 enclose the Radical SAM core domain. C122 and C359 are joined by a disulfide. Residues C129, C133, and C136 each contribute to the [4Fe-4S] cluster site. S-adenosyl-L-methionine-binding positions include G183–E184, S215, S237–H239, and N316. C359 functions as the S-methylcysteine intermediate in the catalytic mechanism.

The protein belongs to the radical SAM superfamily. RlmN family. [4Fe-4S] cluster is required as a cofactor.

It localises to the cytoplasm. It catalyses the reaction adenosine(2503) in 23S rRNA + 2 reduced [2Fe-2S]-[ferredoxin] + 2 S-adenosyl-L-methionine = 2-methyladenosine(2503) in 23S rRNA + 5'-deoxyadenosine + L-methionine + 2 oxidized [2Fe-2S]-[ferredoxin] + S-adenosyl-L-homocysteine. The enzyme catalyses adenosine(37) in tRNA + 2 reduced [2Fe-2S]-[ferredoxin] + 2 S-adenosyl-L-methionine = 2-methyladenosine(37) in tRNA + 5'-deoxyadenosine + L-methionine + 2 oxidized [2Fe-2S]-[ferredoxin] + S-adenosyl-L-homocysteine. Its function is as follows. Specifically methylates position 2 of adenine 2503 in 23S rRNA and position 2 of adenine 37 in tRNAs. m2A2503 modification seems to play a crucial role in the proofreading step occurring at the peptidyl transferase center and thus would serve to optimize ribosomal fidelity. This chain is Dual-specificity RNA methyltransferase RlmN, found in Cronobacter sakazakii (strain ATCC BAA-894) (Enterobacter sakazakii).